Here is a 102-residue protein sequence, read N- to C-terminus: Large ribosomal subunit protein bL21 (102 aa).

It belongs to the bacterial ribosomal protein bL21 family. Part of the 50S ribosomal subunit. Contacts protein L20.

In terms of biological role, this protein binds to 23S rRNA in the presence of protein L20. The chain is Large ribosomal subunit protein bL21 from Geobacillus thermodenitrificans (strain NG80-2).